The sequence spans 133 residues: MSWQAYVDEHLMCDIDGQGQQLAASAIVGHDGSVWAQSSSFPQLKPEEITGIMKDFDEPGHLAPTGLHLGGTKYMVIQGEAGAVIRGKKGSGGITIKKTGQALVFGIYEEPVTPGQCNMVVERLGDYLVEQGL.

A disulfide bridge links Cys-13 with Cys-117. An Involved in PIP2 interaction motif is present at residues 83–99; sequence AVIRGKKGSGGITIKKT. Residue Thr-113 is modified to Phosphothreonine.

It belongs to the profilin family. In terms of assembly, occurs in many kinds of cells as a complex with monomeric actin in a 1:1 ratio. Post-translationally, phosphorylated by MAP kinases.

The protein localises to the cytoplasm. Its subcellular location is the cytoskeleton. In terms of biological role, binds to actin and affects the structure of the cytoskeleton. At high concentrations, profilin prevents the polymerization of actin, whereas it enhances it at low concentrations. The polypeptide is Profilin-3 (Corylus avellana (European hazel)).